Consider the following 327-residue polypeptide: Ribosomal RNA small subunit methyltransferase H (327 aa).

Residues 36 to 38 (GGH), aspartate 61, phenylalanine 88, aspartate 114, and glutamine 121 contribute to the S-adenosyl-L-methionine site.

The protein belongs to the methyltransferase superfamily. RsmH family.

The protein resides in the cytoplasm. The catalysed reaction is cytidine(1402) in 16S rRNA + S-adenosyl-L-methionine = N(4)-methylcytidine(1402) in 16S rRNA + S-adenosyl-L-homocysteine + H(+). Its function is as follows. Specifically methylates the N4 position of cytidine in position 1402 (C1402) of 16S rRNA. The polypeptide is Ribosomal RNA small subunit methyltransferase H (Chlorobium luteolum (strain DSM 273 / BCRC 81028 / 2530) (Pelodictyon luteolum)).